The chain runs to 878 residues: Phosphoenolpyruvate carboxylase (878 aa).

Active-site residues include His-138 and Lys-545.

It belongs to the PEPCase type 1 family. The cofactor is Mg(2+).

It catalyses the reaction oxaloacetate + phosphate = phosphoenolpyruvate + hydrogencarbonate. Its function is as follows. Forms oxaloacetate, a four-carbon dicarboxylic acid source for the tricarboxylic acid cycle. The polypeptide is Phosphoenolpyruvate carboxylase (Shewanella loihica (strain ATCC BAA-1088 / PV-4)).